We begin with the raw amino-acid sequence, 283 residues long: Arylamine N-acetyltransferase (283 aa).

Cysteine 70 acts as the Acyl-thioester intermediate in catalysis. Residues histidine 110 and aspartate 127 contribute to the active site.

This sequence belongs to the arylamine N-acetyltransferase family. Homodimer and homotetramer.

It catalyses the reaction an arylamine + acetyl-CoA = an N-acetylarylamine + CoA. Functionally, catalyzes the transfer of the acetyl group from acetyl coenzyme A to the free amino group of arylamines and hydrazines. Is able to utilize not only acetyl-CoA, but also n-propionyl-CoA and acetoacetyl-CoA as acyl donors, although at a lower rate. As acetyl-CoA and propionyl-CoA are products of cholesterol catabolism and the nat gene is likely present in the same operon than genes involved in cholesterol degradation, this enzyme could have a role in the utilization and regulation of these CoA species. This is Arylamine N-acetyltransferase (nat) from Mycobacterium bovis (strain ATCC BAA-935 / AF2122/97).